A 198-amino-acid chain; its full sequence is Charged multivesicular body protein 2a homolog 2 (198 aa).

Positions 11 to 42 (KEVLRENQRNLNKSMREIDRERVALQNQEKKI) form a coiled coil.

This sequence belongs to the SNF7 family. As to quaternary structure, probable core component of the endosomal sorting required for transport complex III (ESCRT-III). ESCRT-III components are thought to multimerize to form a flat lattice on the perimeter membrane of the endosome.

Its subcellular location is the endosome membrane. Probable core component of the endosomal sorting required for transport complex III (ESCRT-III) which is involved in multivesicular bodies (MVBs) formation and sorting of endosomal cargo proteins into MVBs. MVBs contain intraluminal vesicles (ILVs) that are generated by invagination and scission from the limiting membrane of the endosome and are delivered to lysosomes enabling degradation of membrane proteins. The sequence is that of Charged multivesicular body protein 2a homolog 2 (chmp2a2) from Dictyostelium discoideum (Social amoeba).